A 162-amino-acid polypeptide reads, in one-letter code: SsrA-binding protein (162 aa).

The protein belongs to the SmpB family.

The protein resides in the cytoplasm. Its function is as follows. Required for rescue of stalled ribosomes mediated by trans-translation. Binds to transfer-messenger RNA (tmRNA), required for stable association of tmRNA with ribosomes. tmRNA and SmpB together mimic tRNA shape, replacing the anticodon stem-loop with SmpB. tmRNA is encoded by the ssrA gene; the 2 termini fold to resemble tRNA(Ala) and it encodes a 'tag peptide', a short internal open reading frame. During trans-translation Ala-aminoacylated tmRNA acts like a tRNA, entering the A-site of stalled ribosomes, displacing the stalled mRNA. The ribosome then switches to translate the ORF on the tmRNA; the nascent peptide is terminated with the 'tag peptide' encoded by the tmRNA and targeted for degradation. The ribosome is freed to recommence translation, which seems to be the essential function of trans-translation. This Buchnera aphidicola subsp. Acyrthosiphon pisum (strain 5A) protein is SsrA-binding protein.